The following is a 1330-amino-acid chain: Pre-mRNA-splicing factor CWC22 homolog (1330 aa).

The segment at 1 to 377 (MGESDAESDS…AAKITERQRK (377 aa)) is disordered. Low complexity predominate over residues 9 to 36 (DSSSNSSSSDTSSGSDSDARSESSSSES). A compositionally biased stretch (basic and acidic residues) spans 46-94 (QEESAKDAKKTDDTDRGEKRAKERDAGQDEQPTEQKKTPAAEPRSERQH). Over residues 99–113 (AGVEKQQEEAVAAAE) the composition is skewed to low complexity. Over residues 115 to 135 (ESEKLNEAKKVETPVQRKEEA) the composition is skewed to basic and acidic residues. Polar residues predominate over residues 138–148 (SSVTKELNSPK). Basic and acidic residues predominate over residues 149 to 166 (AQEENAARELEERRKDEE). Residues 168 to 177 (PVTTNGSSKE) are compositionally biased toward polar residues. Phosphothreonine occurs at positions 191 and 201. Basic and acidic residues-rich tracts occupy residues 191-201 (TADHIEEGEIT) and 208-236 (LPTKEEKKAVASKSPPKETQRKQSRSPDG). 2 positions are modified to phosphoserine: S219 and S221. The span at 252 to 277 (SRRRRRSRSKGSRTRSRSKSPIRRRS) shows a compositional bias: basic residues. Basic and acidic residues-rich tracts occupy residues 278–307 (NSLERRRVERQRRHEERDKRDEERAKEREK) and 316–325 (SSRRRDDSRE). Positions 355–366 (TETNADNETVTE) are enriched in low complexity. Residues 420 to 603 (KKSIHGYINK…EVLFQIRKDG (184 aa)) enclose the MIF4G domain. The disordered stretch occupies residues 660–697 (REILGSDDGSSSGSGSGSDSDSDSDGESGSDAEKKAEA). The span at 665 to 678 (SDDGSSSGSGSGSD) shows a compositional bias: low complexity. The segment covering 679–689 (SDSDSDGESGS) has biased composition (acidic residues). Residues 710-826 (ALRRTIYLTI…SWDVLECIQL (117 aa)) enclose the MI domain. The segment at 926–1330 (FRDGSAPAGN…RSSRRSKGRS (405 aa)) is disordered. The span at 941-951 (SSSSSSSSSSD) shows a compositional bias: low complexity. Acidic residues predominate over residues 952–963 (TDSEDSSEEDSS). Positions 964 to 976 (SDSSSESSSSDSS) are enriched in low complexity. The segment covering 980-1012 (KKKRKRKDKDKKKSKKATKEKSKKTKNKKKKKK) has biased composition (basic residues). Residues 1013 to 1033 (AEKEQEKEKEKQRKSKKEKEK) are compositionally biased toward basic and acidic residues. Over residues 1034-1054 (DKKRKKEEKKAAKKKSKHRRK) the composition is skewed to basic residues. Residues 1072–1082 (SESSDSSNSSS) are compositionally biased toward low complexity. The segment covering 1089 to 1110 (PQAKIKRQEHVEKNKFRGRTQD) has biased composition (basic and acidic residues). Residue T1108 is modified to Phosphothreonine. Residues S1111, S1121, S1180, and S1181 each carry the phosphoserine modification. Basic and acidic residues-rich tracts occupy residues 1133–1195 (RRRD…VAHD) and 1203–1320 (SRSY…SRRE). Y1182 carries the post-translational modification Phosphotyrosine. A compositionally biased stretch (basic residues) spans 1321–1330 (RSSRRSKGRS).

Belongs to the CWC22 family. Component of the spliceosome C complex. Interacts with eIF4AIII.

The protein resides in the nucleus speckle. Functionally, required for pre-mRNA splicing and for exon-junction complex (EJC) assembly. Hinders eIF4AIII from non-specifically binding RNA and escorts it to the splicing machinery to promote EJC assembly on mature mRNAs. This is Pre-mRNA-splicing factor CWC22 homolog (ncm) from Drosophila melanogaster (Fruit fly).